The following is a 617-amino-acid chain: BTB/POZ domain-containing protein At3g08570 (617 aa).

Residues 36-106 form the BTB domain; it reads GDITIVVDGE…CYGINFEITI (71 aa). The NPH3 domain occupies 210 to 490; sequence EWWIEDLSAL…VRVLYSEQLR (281 aa). Tyr431 bears the Phosphotyrosine mark. Disordered stretches follow at residues 505–525 and 585–617; these read LSSQKHSSENPSRAVSPRDTY and GGGPTEGKLRNANRKSKSRLERKTVRSRPESMF. Over residues 602–617 the composition is skewed to basic and acidic residues; it reads SRLERKTVRSRPESMF.

This sequence belongs to the NPH3 family.

It participates in protein modification; protein ubiquitination. Functionally, may act as a substrate-specific adapter of an E3 ubiquitin-protein ligase complex (CUL3-RBX1-BTB) which mediates the ubiquitination and subsequent proteasomal degradation of target proteins. The polypeptide is BTB/POZ domain-containing protein At3g08570 (Arabidopsis thaliana (Mouse-ear cress)).